The sequence spans 505 residues: Histidine--tRNA ligase, mitochondrial (505 aa).

A mitochondrion-targeting transit peptide spans 1-31; it reads MPHLGPLRRRAWAALLGQLLRPPSTVCTRGC. Ser66 bears the Phosphoserine mark. Residues 130 to 132, Arg157, Gln173, Asp177, Arg326, and 330 to 331 each bind L-histidine; these read DLT and YY. Lys443 carries the post-translational modification N6-acetyllysine.

Belongs to the class-II aminoacyl-tRNA synthetase family. As to quaternary structure, homodimer.

Its subcellular location is the mitochondrion. It catalyses the reaction tRNA(His) + L-histidine + ATP = L-histidyl-tRNA(His) + AMP + diphosphate + H(+). Functionally, mitochondrial aminoacyl-tRNA synthetase that catalyzes the ATP-dependent ligation of histidine to the 3'-end of its cognate tRNA, via the formation of an aminoacyl-adenylate intermediate (His-AMP). This Mus musculus (Mouse) protein is Histidine--tRNA ligase, mitochondrial (Hars2).